A 135-amino-acid polypeptide reads, in one-letter code: Cytochrome b5, seed isoform (135 aa).

The region spanning 5–81 (SKVFTLAEVS…LDEYYVGDID (77 aa)) is the Cytochrome b5 heme-binding domain. Histidine 40 and histidine 64 together coordinate heme. A helical membrane pass occupies residues 107-127 (FIVKLLQFLVPLIILGVAFGV).

The protein belongs to the cytochrome b5 family. As to expression, specifically expressed in developing seeds.

The protein resides in the endoplasmic reticulum membrane. The protein localises to the microsome membrane. Functionally, cytochrome b5 is a membrane bound hemoprotein which function as an electron carrier for several membrane bound oxygenases. May play a key role in the modification by desaturation of fatty acids in the endoplasmic reticulum, which in the developing seed is utilized for membrane synthesis and in the developmentally regulated production of large amounts of storage lipids. The protein is Cytochrome b5, seed isoform of Nicotiana tabacum (Common tobacco).